The following is a 129-amino-acid chain: Capsid protein (129 aa).

The interval 31–104 (EWISSNSRSQ…FATNSDCELI (74 aa)) is viral RNA-binding.

It belongs to the Leviviricetes capsid protein family. As to quaternary structure, homodimer. The capsid proteins form dimers that assemble by group of 5. Twelve such pentamers are linked together with free dimers. The homodimers binds to the viral RNA via an operator hairpin, but also to many other RNA sequences in the viral genome; this interaction probably shifts the virus from the replicative to the assembly phase and ensures specific encapsidation of the viral genome.

The protein resides in the virion. Its function is as follows. Capsid protein self-assembles to form an icosahedral capsid with a T=3 symmetry, about 26 nm in diameter, and consisting of 89 capsid proteins dimers (178 capsid proteins). Involved in viral genome encapsidation through the interaction between a capsid protein dimer and the multiple packaging signals present in the RNA genome. The capsid also contains 1 copy of the A2 maturation protein. Functionally, acts as a translational repressor of viral replicase synthesis late in infection. This latter function is the result of capsid protein interaction with an RNA hairpin which contains the replicase ribosome-binding site. The chain is Capsid protein from Enterobacteria phage f2 (Bacteriophage f2).